Here is a 1440-residue protein sequence, read N- to C-terminus: MDDDVDAGEIYAVDRQREEGSASAAAFSRSPSTGRVDDDDDDLLTYGRSARRMAALPAPAMPEGTELRRPVGGDVVGDDDYLRFLYKFKELFDRVGIKLPTIEVRYKNLNVEAESYVGSRGLPTILNTYANILKGLANTLHMTTRSKQKISVLHNASGIIKPHRMTLLLGSPGSGKTSLLLALAGTLPSTVKVSGMITYNGHTMDKFIPQRSAAYVSQHDLHMAELTVRETINFSAKCQGVGHHYDLFLELLRREEEENITPDPETDIYLKAATTGEEKAEIVTNHILKILRLDICADTIVGDNMLRGISGGQKRCLDAHTAPNVDSAAEMLVTLGRALFMDEISNGLDSSTTFQIVNTIQQTIHVLGGTAVIALLQPAPETYELFDDIILLSDGQVVYSGPRDHVLEFFKSLGFKCLERIGVADFLQEVTSRKDQKQYWIHGDDTYRYIPVTVIAEAFQCFHVGQAIRSELAIPFDNSKSHIAALKTSKHGVNLKKILKANIDREILLLKRKSFLYIFNALQLTLVAIIAMSVFIHTNMHHDSIENGRMYMGVQFFGTLAIMFKGLAEMGAALANLPVFFKQRDLLFYPAWTYSLPSWIIKTPISFLNTIIWVSITYYVIGFDPNIERCFRQFLVLFVMSEAICGLFRFIAALTRHPVVASTVSEFCILIVMVSSGFILSRDEVKKWLIWEYWTSPLMYALNALAVNEFLSPSWNEALPGFREPLGRLVLESRGVFPEAKWYWIGLGALLGYVLLFNILYTICLSILTLLKRNVREMSQETLQIKLENLTGYDQEPSSGGRVTNDKRYTEGGNNDEATSSNANHNSSPARKGSILPFVPVYMTFEDIRYSIDMPKALKVQGMAGSRLELLKDLSGSFRPGVLTALMGISGAGKTTLLDVLAGRKTSGHIHGNITVSGYPKKQETFSRVSGYCEQNDIHSPNLTVYESLMFSAWLRLPAEIDSMARKRFIDEFMELVELFPLKDALVGLLGLSGLSTEQRKRLTIAVELVANPSIIFMDEPTSGLDARAAAIVMRTVRNIVDMGRTVVCTIHQPSIDIFESFDELFLMKRGGEAIYVGPLGQHSCELIKYFESIEGVRKIKHGYNPSTWMLEVTCTLQEQITGVNFTQVYKNSELYRRNKNLIKELSTPHDGSSDLLFPTKYSQTFVIQCLACLWKQRLSYWRNPPYIAVNFFFTVVIALLFGTMFWGVGRKRQSQQALLSAMGSMYSTCFTLGVQNSSSVQPVVNIERTVFYRERASHMYSPLPYALGQVVVELPYIFLQTLIYGVIVYSMMGYEWTCTKFFWYMFFMYFTLSYFTFYGMMAAGLTPNYTMSSIVSTTFYAIWHLFSGFLIPKTRIPIWWRWYYWICPVAWTINGLVTSQFGDVDDKFDNGVRVSDFVESYFGYNLDLLWVAAMAVVSFAILFAILFGFSLKLFNFQKR.

A disordered region spans residues Met1–Asp42. The span at Ser21–Ser32 shows a compositional bias: low complexity. The ABC transporter 1 domain maps to Ala137–Glu419. Gly170–Thr177 contributes to the ATP binding site. An ABC transmembrane type-2 1 domain is found at Lys497–Phe710. A run of 7 helical transmembrane segments spans residues Leu516–Ile536, Ala561–Phe581, Thr603–Phe623, Phe634–Leu654, Val659–Ile679, Trp688–Asn708, and Ile745–Leu765. Positions Asp794–Pro829 are disordered. The segment covering Gly812 to Pro829 has biased composition (polar residues). In terms of domain architecture, ABC transporter 2 spans Met843–Glu1095. Residue Gly888–Thr895 participates in ATP binding. The ABC transmembrane type-2 2 domain occupies Ile1168 to Phe1382. Transmembrane regions (helical) follow at residues Ile1188 to Gly1208, Leu1219 to Gln1236, Val1271 to Ser1291, Phe1302 to Met1322, Met1332 to Ile1352, Ile1357 to Leu1377, and Leu1410 to Phe1430.

It belongs to the ABC transporter superfamily. ABCG family. PDR (TC 3.A.1.205) subfamily.

It localises to the membrane. Its function is as follows. May be a general defense protein. This is ABC transporter G family member 46 from Oryza sativa subsp. japonica (Rice).